The primary structure comprises 533 residues: Neuropilin and tolloid-like protein 1 (533 aa).

The first 22 residues, 1–22 (MIYGRSLFHIIASLIILHSSGA), serve as a signal peptide directing secretion. The Extracellular portion of the chain corresponds to 23–344 (TKKGTEKQIT…LDQLTNTSGT (322 aa)). 7 cysteine pairs are disulfide-bonded: cysteine 41–cysteine 68, cysteine 96–cysteine 118, cysteine 172–cysteine 202, cysteine 229–cysteine 251, cysteine 292–cysteine 304, cysteine 299–cysteine 317, and cysteine 311–cysteine 326. CUB domains follow at residues 41 to 155 (CGTW…YNFT) and 172 to 287 (CEFE…FTSF). Residues 291 to 327 (PCEGNTFFCHSNMCINNTLVCNGLQNCVYPWDENHCK) form the LDL-receptor class A domain. N-linked (GlcNAc...) asparagine glycosylation occurs at asparagine 306. N-linked (GlcNAc...) asparagine glycosylation is present at asparagine 340. Residues 345–365 (VIGVTSCIVIILIIVSVIVQI) traverse the membrane as a helical segment. Topologically, residues 366-533 (KQPRKKYVQR…HESEYNTTRV (168 aa)) are cytoplasmic. Residue tyrosine 417 is modified to Phosphotyrosine. The short motif at 531 to 533 (TRV) is the PDZ-binding element.

In terms of assembly, interacts with PLZ domains of DLG2, DLG3 and DLG4 via its C-terminal TRV domain. Interacts with GRIN2A and GRIN2B via its CUB domains. In terms of tissue distribution, expressed only in brain. Present throughout the central nervous system. Highly expressed in the hippocampal CA3 region, olfactory bulb and tubercle, caudate putamen, and neocortex in the adult brain.

The protein localises to the membrane. The protein resides in the postsynaptic density membrane. Its function is as follows. Involved in the development and/or maintenance of neuronal circuitry. Accessory subunit of the neuronal N-methyl-D-aspartate receptor (NMDAR) critical for maintaining the abundance of GRIN2A-containing NMDARs in the postsynaptic density. Regulates long-term NMDA receptor-dependent synaptic plasticity and cognition, at least in the context of spatial learning and memory. This chain is Neuropilin and tolloid-like protein 1 (Neto1), found in Mus musculus (Mouse).